The primary structure comprises 90 residues: Small ribosomal subunit protein bS16 (90 aa).

It belongs to the bacterial ribosomal protein bS16 family.

The polypeptide is Small ribosomal subunit protein bS16 (Lactobacillus gasseri (strain ATCC 33323 / DSM 20243 / BCRC 14619 / CIP 102991 / JCM 1131 / KCTC 3163 / NCIMB 11718 / NCTC 13722 / AM63)).